A 301-amino-acid polypeptide reads, in one-letter code: Multifunctional dioxygenase prhA (301 aa).

3 residues coordinate Fe cation: His-130, Asp-132, and His-214.

The protein belongs to the PhyH family. As to quaternary structure, homodimer. The cofactor is Fe cation.

It catalyses the reaction preaustinoid A1 + 2-oxoglutarate + O2 = berkeleyone B + succinate + CO2 + H2O. It carries out the reaction berkeleyone B + 2-oxoglutarate + O2 = berkeleydione + succinate + CO2 + H2O. The enzyme catalyses preaustinoid A + 2 2-oxoglutarate + 2 O2 = berkeleytrione + 2 succinate + 2 CO2 + H2O. Its pathway is secondary metabolite biosynthesis; terpenoid biosynthesis. Its function is as follows. Multifunctional dioxygenase; part of the gene cluster that mediates the biosynthesis of paraherquonin, a meroterpenoid with a unique, highly congested hexacyclic molecular architecture. The first step of the pathway is the synthesis of 3,5-dimethylorsellinic acid (DMOA) by the polyketide synthase prhL. Synthesis of DMOA is followed by farnesylation by the prenyltransferase prhE, methylesterification by the methyl-transferase prhM, epoxidation of the prenyl chain by the flavin-dependent monooxygenase prhF, and cyclization of the farnesyl moiety by the terpene cyclase prhH, to yield the tetracyclic intermediate, protoaustinoid A. The short chain dehydrogenase prhI then oxidizes the C-3 alcohol group of the terpene cyclase product to transform protoaustinoid A into protoaustinoid B. The FAD-binding monooxygenase prhJ catalyzes the oxidation of protoaustinoid B into preaustinoid A which is further oxidized into preaustinoid A1 by FAD-binding monooxygenase phrK. Finally, prhA leads to berkeleydione via the berkeleyone B intermediate. PrhA is a multifunctional dioxygenase that first desaturates at C5-C6 to form berkeleyone B, followed by rearrangement of the A/B-ring to form the cycloheptadiene moiety in berkeleydione. Berkeleydione serves as the key intermediate for the biosynthesis of paraherquonin as well as many other meroterpenoids. The cytochrome P450 monooxygenases prhB, prhD, and prhN, as well as the isomerase prhC, are probably involved in the late stage of paraherquonin biosynthesis, after the production of berkeleydione. Especially prhC might be a multifunctional enzyme that catalyzes the D-ring expansion via intramolecular methoxy rearrangement, as well as the hydrolysis of the expanded D-ring. The polypeptide is Multifunctional dioxygenase prhA (Penicillium brasilianum).